Consider the following 240-residue polypeptide: Proteasome subunit alpha (240 aa).

Belongs to the peptidase T1A family. As to quaternary structure, the 20S proteasome core is composed of 14 alpha and 14 beta subunits that assemble into four stacked heptameric rings, resulting in a barrel-shaped structure. The two inner rings, each composed of seven catalytic beta subunits, are sandwiched by two outer rings, each composed of seven alpha subunits. The catalytic chamber with the active sites is on the inside of the barrel. Has a gated structure, the ends of the cylinder being occluded by the N-termini of the alpha-subunits. Is capped at one or both ends by the proteasome regulatory ATPase, PAN.

It localises to the cytoplasm. With respect to regulation, the formation of the proteasomal ATPase PAN-20S proteasome complex, via the docking of the C-termini of PAN into the intersubunit pockets in the alpha-rings, triggers opening of the gate for substrate entry. Interconversion between the open-gate and close-gate conformations leads to a dynamic regulation of the 20S proteasome proteolysis activity. In terms of biological role, component of the proteasome core, a large protease complex with broad specificity involved in protein degradation. In Methanoregula boonei (strain DSM 21154 / JCM 14090 / 6A8), this protein is Proteasome subunit alpha.